Consider the following 441-residue polypeptide: tRNA modification GTPase MnmE (441 aa).

3 residues coordinate (6S)-5-formyl-5,6,7,8-tetrahydrofolate: Arg-24, Glu-81, and Lys-121. Residues 218–366 (GMVVAIAGPP…LLRELTRFAA (149 aa)) enclose the TrmE-type G domain. Residues 228–233 (NVGKST), 247–253 (SPHAGTT), and 272–275 (DTAG) each bind GTP. Mg(2+)-binding residues include Ser-232 and Thr-253. A (6S)-5-formyl-5,6,7,8-tetrahydrofolate-binding site is contributed by Lys-441.

The protein belongs to the TRAFAC class TrmE-Era-EngA-EngB-Septin-like GTPase superfamily. TrmE GTPase family. Homodimer. Heterotetramer of two MnmE and two MnmG subunits. Requires K(+) as cofactor.

It is found in the cytoplasm. Its function is as follows. Exhibits a very high intrinsic GTPase hydrolysis rate. Involved in the addition of a carboxymethylaminomethyl (cmnm) group at the wobble position (U34) of certain tRNAs, forming tRNA-cmnm(5)s(2)U34. The protein is tRNA modification GTPase MnmE of Rhodopseudomonas palustris (strain ATCC BAA-98 / CGA009).